The primary structure comprises 250 residues: Pyridoxine 5'-phosphate synthase (250 aa).

Residues Asn8 and Arg19 each contribute to the 3-amino-2-oxopropyl phosphate site. His44 serves as the catalytic Proton acceptor. Positions 46 and 51 each coordinate 1-deoxy-D-xylulose 5-phosphate. The active-site Proton acceptor is the Glu76. Residue Thr106 participates in 1-deoxy-D-xylulose 5-phosphate binding. The active-site Proton donor is His200. 3-amino-2-oxopropyl phosphate is bound by residues Asp201 and 223 to 224 (GH).

Belongs to the PNP synthase family. In terms of assembly, homooctamer; tetramer of dimers.

The protein localises to the cytoplasm. It carries out the reaction 3-amino-2-oxopropyl phosphate + 1-deoxy-D-xylulose 5-phosphate = pyridoxine 5'-phosphate + phosphate + 2 H2O + H(+). Its pathway is cofactor biosynthesis; pyridoxine 5'-phosphate biosynthesis; pyridoxine 5'-phosphate from D-erythrose 4-phosphate: step 5/5. Its function is as follows. Catalyzes the complicated ring closure reaction between the two acyclic compounds 1-deoxy-D-xylulose-5-phosphate (DXP) and 3-amino-2-oxopropyl phosphate (1-amino-acetone-3-phosphate or AAP) to form pyridoxine 5'-phosphate (PNP) and inorganic phosphate. This is Pyridoxine 5'-phosphate synthase from Rhizobium meliloti (strain 1021) (Ensifer meliloti).